The sequence spans 371 residues: MEAKRPEQTRVVVGMSGGVDSSVTALLLKEQGYDVIGIFMKNWDDTDENGVCTATEDYQDVVQVCNQLGIAYYAVNFEKEYWDKVFTYFLEEYKAGRTPNPDVMCNKEIKFKAFLNHALTLGADYVATGHYAQVKNVDGQYQLIRGKDPNKDQTYFLNALSQQQLSRVMFPLGHLEKKEVRAIAERAGLATAKKKDSTGICFIGKRDFKEFLSSYLPAQPGEMQTLDGEVKGTHDGLMYYTLGQRQGLGIGGSGEPWFVIGKNLEKNILYVGQGFHHPGLYSEGLRAIKVNWILRRESDEPFECTAKFRYRQPDQKVTVYPQSDGAVEVLFAEPQRAITPGQAVVFYDGDVCLGGGTIDHVLKKKEDRESA.

Residues 14–21 and methionine 40 each bind ATP; that span reads GMSGGVDS. The segment at 100–102 is interaction with target base in tRNA; that stretch reads NPD. Residue cysteine 105 is the Nucleophile of the active site. Cysteine 105 and cysteine 201 are oxidised to a cystine. Glycine 129 lines the ATP pocket. The tract at residues 151–153 is interaction with tRNA; it reads KDQ. The active-site Cysteine persulfide intermediate is cysteine 201. The interval 309-310 is interaction with tRNA; the sequence is RY.

Belongs to the MnmA/TRMU family.

It localises to the cytoplasm. The enzyme catalyses S-sulfanyl-L-cysteinyl-[protein] + uridine(34) in tRNA + AH2 + ATP = 2-thiouridine(34) in tRNA + L-cysteinyl-[protein] + A + AMP + diphosphate + H(+). Catalyzes the 2-thiolation of uridine at the wobble position (U34) of tRNA, leading to the formation of s(2)U34. In Halalkalibacterium halodurans (strain ATCC BAA-125 / DSM 18197 / FERM 7344 / JCM 9153 / C-125) (Bacillus halodurans), this protein is tRNA-specific 2-thiouridylase MnmA.